We begin with the raw amino-acid sequence, 144 residues long: Protein NrdI (144 aa).

It belongs to the NrdI family.

In terms of biological role, probably involved in ribonucleotide reductase function. The chain is Protein NrdI from Streptococcus pyogenes serotype M4 (strain MGAS10750).